A 360-amino-acid chain; its full sequence is Dihydroorotate dehydrogenase (quinone) (360 aa).

Residues 60–64 (AGFDK) and Thr-84 contribute to the FMN site. Lys-64 contributes to the substrate binding site. 109-113 (NRMGF) contributes to the substrate binding site. FMN is bound by residues Asn-137 and Asn-168. Position 168 (Asn-168) interacts with substrate. The active-site Nucleophile is Ser-171. Residue Asn-173 coordinates substrate. Lys-213 and Ser-241 together coordinate FMN. 242–243 (NT) is a binding site for substrate. Residues Gly-264, Gly-293, and 314-315 (YS) contribute to the FMN site.

The protein belongs to the dihydroorotate dehydrogenase family. Type 2 subfamily. As to quaternary structure, monomer. Requires FMN as cofactor.

The protein localises to the cell membrane. The enzyme catalyses (S)-dihydroorotate + a quinone = orotate + a quinol. It participates in pyrimidine metabolism; UMP biosynthesis via de novo pathway; orotate from (S)-dihydroorotate (quinone route): step 1/1. Functionally, catalyzes the conversion of dihydroorotate to orotate with quinone as electron acceptor. The sequence is that of Dihydroorotate dehydrogenase (quinone) from Bartonella tribocorum (strain CIP 105476 / IBS 506).